We begin with the raw amino-acid sequence, 673 residues long: Polyunsaturated fatty acid 5-lipoxygenase (673 aa).

Residues 2–117 form the PLAT domain; it reads PSYTVTVATG…EIVLRDGRAK (116 aa). Gly-17, Thr-18, Asp-19, Asn-44, Asp-45, Glu-47, Asp-79, and Asp-80 together coordinate Ca(2+). One can recognise a Lipoxygenase domain in the interval 118-673; the sequence is LARDDQIHIL…PDRIPNSVAI (556 aa). A Phosphoserine modification is found at Ser-271. 2 residues coordinate Fe cation: His-367 and His-372. Ser-523 is subject to Phosphoserine. Fe cation contacts are provided by His-550, Asn-554, and Ile-673.

The protein belongs to the lipoxygenase family. Homodimer. Interacts with ALOX5AP and LTC4S. Interacts with COTL1, the interaction is required for stability and efficient catalytic activity. Interacts with PIK3R1; this interaction bridges ALOX5 with CD40 after CD40 ligation in B cells and leads to the production of reactive oxygen species (ROS). Interacts (via PLAT domain) with DICER1 (via Dicer dsRNA-binding fold domain); this interaction enhances arachidonate 5-lipoxygenase activity and modifies the miRNA precursor processing activity of DICER1. It depends on Fe cation as a cofactor. Serine phosphorylation by MAPKAPK2 is stimulated by arachidonic acid. Phosphorylation on Ser-523 by PKA has an inhibitory effect. Phosphorylation on Ser-271 prevents export from the nucleus. Phosphorylation at Ser-523 is stimulated by 8-bromo-3',5'-cyclic AMP or prostaglandin E2.

The protein resides in the cytoplasm. It localises to the nucleus matrix. The protein localises to the nucleus membrane. Its subcellular location is the perinuclear region. It is found in the cytosol. The protein resides in the nucleus envelope. It localises to the nucleus intermembrane space. The catalysed reaction is (5Z,8Z,11Z,14Z)-eicosatetraenoate + O2 = leukotriene A4 + H2O. It catalyses the reaction 18-HEPE + O2 = (5S)-hydroperoxy-18-hydroxy-(7E,9E,11Z,14Z,16E)-eicosapentaenoate. It carries out the reaction (18R)-hydroxy-(5Z,8Z,11Z,14Z,16E)-eicosapentaenoate + O2 = (5S)-hydroperoxy-(18R)-hydroxy-(6E,8Z,11Z,14Z,16E)-eicosapentaenoate. The enzyme catalyses (18S)-hydroxy-(5Z,8Z,11Z,14Z,16E)-eicosapentaenoate + O2 = (5S)-hydroperoxy-(18S)-hydroxy-(6E,8Z,11Z,14Z,16E)-eicosapentaenoate. The catalysed reaction is (5S)-hydroperoxy-(18S)-hydroxy-(6E,8Z,11Z,14Z,16E)-eicosapentaenoate = (5S,6S)-epoxy-(18S)-hydroxy-(7E,9E,11Z,14Z,16E)-eicosapentaenoate + H2O. It catalyses the reaction (5S)-hydroperoxy-(18R)-hydroxy-(6E,8Z,11Z,14Z,16E)-eicosapentaenoate = (5S,6S)-epoxy-(18R)-hydroxy-(7E,9E,11Z,14Z,16E)-eicosapentaenoate + H2O. It carries out the reaction (5S)-hydroperoxy-18-hydroxy-(7E,9E,11Z,14Z,16E)-eicosapentaenoate = (5S,6S)-epoxy-18-hydroxy-(7E,9E,11Z,14Z,16E)-eicosapentaenoate + H2O. The enzyme catalyses (5Z,8Z,11Z,14Z)-eicosatetraenoate + O2 = (5S)-hydroperoxy-(6E,8Z,11Z,14Z)-eicosatetraenoate. The catalysed reaction is (15S)-hydroxy-(5Z,8Z,11Z,13E)-eicosatetraenoate + O2 = (5S)-hydroperoxy-(15S)-hydroxy-(6E,8Z,11Z,13E)-eicosatetraenoate. It catalyses the reaction (5S)-hydroperoxy-(6E,8Z,11Z,14Z)-eicosatetraenoate = leukotriene A4 + H2O. It carries out the reaction (5Z,8Z,11Z,14Z)-eicosatetraenoate + O2 = (8S)-hydroperoxy-(5Z,9E,11Z,14Z)-eicosatetraenoate. The enzyme catalyses (5Z,8Z,11Z,14Z)-eicosatetraenoate + O2 = (12S)-hydroperoxy-(5Z,8Z,10E,14Z)-eicosatetraenoate. The catalysed reaction is (5Z,8Z)-eicosadienoate + O2 = (5S)-hydroperoxy-(6E,8Z)-eicosadienoate. It catalyses the reaction (12S)-hydroxy-(5Z,8Z,10E,14Z)-eicosatetraenoate + O2 = (5S)-hydroperoxy-(12S)-hydroxy-(6E,8Z,10E,14Z)-eicosatetraenoate. It carries out the reaction (5Z,8Z,11Z,14Z,17Z)-eicosapentaenoate + O2 = 5-hydroperoxy-(6E,8Z,11Z,14Z,17Z)-eicosapentaenoate. The enzyme catalyses (4Z,7Z,10Z,13Z,16Z,19Z)-docosahexaenoate + O2 = (14S)-hydroperoxy-(4Z,7Z,10Z,12E,16Z,19Z)-docosahexaenoate. The catalysed reaction is (4Z,7Z,10Z,13Z,16Z,19Z)-docosahexaenoate + O2 = (7S)-hydroperoxy-(4Z,8E,10Z,13Z,16Z,19Z)-docosahexaenoate. It catalyses the reaction (4Z,7Z,10Z,13Z,16Z,19Z)-docosahexaenoate + O2 = (17S)-hydroperoxy-(4Z,7Z,10Z,13Z,15E,19Z)-docosahexaenoate. It participates in lipid metabolism; leukotriene A4 biosynthesis. In terms of biological role, catalyzes the oxygenation of arachidonate to 5-hydroperoxyeicosatetraenoate (5-HPETE) followed by the dehydration to 5,6- epoxyeicosatetraenoate (Leukotriene A4/LTA4), the first two steps in the biosynthesis of leukotrienes, which are potent mediators of inflammation. Also catalyzes the oxygenation of arachidonate into 8-hydroperoxyicosatetraenoate (8-HPETE) and 12-hydroperoxyicosatetraenoate (12-HPETE). Displays lipoxin synthase activity being able to convert (15S)-HETE into a conjugate tetraene. Although arachidonate is the preferred substrate, this enzyme can also metabolize oxidized fatty acids derived from arachidonate such as (15S)-HETE, eicosapentaenoate (EPA) such as (18R)- and (18S)-HEPE or docosahexaenoate (DHA) which lead to the formation of specialized pro-resolving mediators (SPM) lipoxin and resolvins E and D respectively, therefore it participates in anti-inflammatory responses. Oxidation of DHA directly inhibits endothelial cell proliferation and sprouting angiogenesis via peroxisome proliferator-activated receptor gamma (PPARgamma). It does not catalyze the oxygenation of linoleic acid and does not convert (5S)-HETE to lipoxin isomers. In addition to inflammatory processes, it participates in dendritic cell migration, wound healing through an antioxidant mechanism based on heme oxygenase-1 (HO-1) regulation expression, monocyte adhesion to the endothelium via ITGAM expression on monocytes. Moreover, it helps establish an adaptive humoral immunity by regulating primary resting B cells and follicular helper T cells and participates in the CD40-induced production of reactive oxygen species (ROS) after CD40 ligation in B cells through interaction with PIK3R1 that bridges ALOX5 with CD40. May also play a role in glucose homeostasis, regulation of insulin secretion and palmitic acid-induced insulin resistance via AMPK. Can regulate bone mineralization and fat cell differentiation increases in induced pluripotent stem cells. The protein is Polyunsaturated fatty acid 5-lipoxygenase of Mesocricetus auratus (Golden hamster).